Here is a 264-residue protein sequence, read N- to C-terminus: Electron transfer flavoprotein subunit beta (264 aa).

AMP-binding positions include A6, 36 to 39 (NEWD), V64, 119 to 122 (GVQS), and 127 to 130 (YAST).

Heterodimer of an alpha and a beta subunit. Forms a ternary complex with trimethylamine dehydrogenase.

Functionally, heterodimeric electron transfer flavoprotein that accepts electrons from trimethylamine dehydrogenase. It transfers the electrons to the main respiratory chain via ETF-ubiquinone oxidoreductase (ETF dehydrogenase). EtfB binds an AMP molecule that probably has a purely structural role. This Methylophilus methylotrophus (Bacterium W3A1) protein is Electron transfer flavoprotein subunit beta (etfB).